The primary structure comprises 324 residues: MNMRFSPKALVRQLGRLSLVACLSLGLLGAADWLQPQAAAAYPFWAQENYASPREATGKIVCANCHLAKKPTEVEVPHSVLPDTVFKAVVKIPYDRSSQQVLGDGSKGGLNVGAVLMLPDGFKLAPEDRISEELKEEIGNVYFTNYSADQENIILVGPLPGDDHQEIVFPVLSPDPAKDKNVFFGKYQIHVGGNRGRGQVYPTGQKSNNGVYTASAAGVIDAVTETASGYDIVIRKADGSTVTDAVPAGPSPIVAVGSEVAAGAALTNDPNVGGFGQIDTEIVLQSSNRVLGVIAFFFAVMLAQIMLVLKKKQVEKVQAAELNF.

Residues 1–30 (MNMRFSPKALVRQLGRLSLVACLSLGLLGA) form the signal peptide. Positions 42, 62, 65, and 66 each coordinate heme. The helical transmembrane segment at 290-310 (VLGVIAFFFAVMLAQIMLVLK) threads the bilayer.

Belongs to the cytochrome f family. As to quaternary structure, the 4 large subunits of the cytochrome b6-f complex are cytochrome b6, subunit IV (17 kDa polypeptide, PetD), cytochrome f and the Rieske protein, while the 4 small subunits are PetG, PetL, PetM and PetN. The complex functions as a dimer. Heme is required as a cofactor.

It is found in the cellular thylakoid membrane. Functionally, component of the cytochrome b6-f complex, which mediates electron transfer between photosystem II (PSII) and photosystem I (PSI), cyclic electron flow around PSI, and state transitions. The sequence is that of Cytochrome f from Synechococcus elongatus (strain ATCC 33912 / PCC 7942 / FACHB-805) (Anacystis nidulans R2).